We begin with the raw amino-acid sequence, 137 residues long: Fatty acid-binding protein homolog 8 (137 aa).

Residues lysine 24 to lysine 34 carry the Nuclear localization signal motif.

Belongs to the calycin superfamily. Fatty-acid binding protein (FABP) family. Monomer. Intestine.

It localises to the lysosome. It is found in the nucleus. Its function is as follows. Lysosomal lipid chaperone which binds to a wide range of unsaturated fatty acids, including high affinity binding to oleic acid and oleoylethanolamide, to transport them into the nucleus. As part of a lysosome-to-nucleus retrograde lipid signaling pathway, translocates into the nucleus where it activates the transcription of genes promoting longevity and activation of mitochondrial beta oxidation. This is Fatty acid-binding protein homolog 8 from Caenorhabditis elegans.